Reading from the N-terminus, the 382-residue chain is uncharacterized protein (382 aa).

Helical transmembrane passes span 8–28, 45–65, 75–95, 102–122, 131–151, 157–177, 204–224, 231–251, 270–290, 291–311, 325–345, and 349–369; these read VMLL…LNTL, MVSS…GYLI, YLAS…VGFW, FIAG…LMCS, LLAA…LLVS, LLHV…PLLF, LGVN…GLMP, GMAN…GILG, VQVF…AMAP, ALFI…AWAC, ALLL…AMLM, and SDNL…LMLL.

It belongs to the major facilitator superfamily. YcaD (TC 2.A.1.26) family.

It is found in the cell inner membrane. This is an uncharacterized protein from Salmonella enteritidis PT4 (strain P125109).